The chain runs to 620 residues: 1-deoxy-D-xylulose-5-phosphate synthase (620 aa).

Residues H80 and 121–123 each bind thiamine diphosphate; that span reads GHS. Position 152 (D152) interacts with Mg(2+). Residues 153 to 154, N181, Y288, and E370 contribute to the thiamine diphosphate site; that span reads GA. N181 serves as a coordination point for Mg(2+).

It belongs to the transketolase family. DXPS subfamily. In terms of assembly, homodimer. Mg(2+) is required as a cofactor. The cofactor is thiamine diphosphate.

It carries out the reaction D-glyceraldehyde 3-phosphate + pyruvate + H(+) = 1-deoxy-D-xylulose 5-phosphate + CO2. It participates in metabolic intermediate biosynthesis; 1-deoxy-D-xylulose 5-phosphate biosynthesis; 1-deoxy-D-xylulose 5-phosphate from D-glyceraldehyde 3-phosphate and pyruvate: step 1/1. Catalyzes the acyloin condensation reaction between C atoms 2 and 3 of pyruvate and glyceraldehyde 3-phosphate to yield 1-deoxy-D-xylulose-5-phosphate (DXP). The sequence is that of 1-deoxy-D-xylulose-5-phosphate synthase from Shigella flexneri.